We begin with the raw amino-acid sequence, 426 residues long: Glutamyl-tRNA reductase (426 aa).

Substrate-binding positions include 49-52 (TCNR), Ser109, 114-116 (EGQ), and Gln120. Catalysis depends on Cys50, which acts as the Nucleophile. 189–194 (GAGETG) contributes to the NADP(+) binding site.

The protein belongs to the glutamyl-tRNA reductase family. Homodimer.

The enzyme catalyses (S)-4-amino-5-oxopentanoate + tRNA(Glu) + NADP(+) = L-glutamyl-tRNA(Glu) + NADPH + H(+). The protein operates within porphyrin-containing compound metabolism; protoporphyrin-IX biosynthesis; 5-aminolevulinate from L-glutamyl-tRNA(Glu): step 1/2. Its function is as follows. Catalyzes the NADPH-dependent reduction of glutamyl-tRNA(Glu) to glutamate 1-semialdehyde (GSA). The protein is Glutamyl-tRNA reductase (hemA) of Chlorobaculum parvum (strain DSM 263 / NCIMB 8327) (Chlorobium vibrioforme subsp. thiosulfatophilum).